A 487-amino-acid polypeptide reads, in one-letter code: MKPSTEWWRYLAPLAVIAIIALLPVPAGLENHTWLYFAVFTGVIVGLILEPVPGAVVAMVGISIIAILSPWLLFSPEQLAQPGFKFTAKSLSWAVSGFSNSVIWLIFAAFMFGTGYEKTGLGRRIALILVKKMGHRTLFLGYAVMFSELILAPVTPSNSARGAGIIYPIIRNLPPLYQSQPNDSSSRSIGSYIMWMGIVADCVTSAIFLTAMAPNLLLIGLMKSASHATLSWGDWFLGMLPLSILLVLLVPWLAYVLYPPVLKSGDQVPRWAETELQAMGPLCSREKRMLGLMVGALVLWIFGGDYIDAAMVGYSVVALMLLLRIISWDDIVSNKAAWNVFFWLASLITLATGLNNTGFISWFGKLLAGSLSGYSPTMVMVTLIVVFYLLRYFFASATAYTCALAPMMIAAALAMPEIPLPVFCLMVGAAIGLGSILTPYATGPSPIYYGSGYLPTADYWRLGAIFGLIFLVLLVITGLLWMPVVLL.

14 helical membrane passes run tyrosine 10–glutamate 30, threonine 33–proline 53, glycine 54–phenylalanine 74, tryptophan 93–glycine 113, threonine 137–serine 157, isoleucine 189–leucine 209, phenylalanine 236–valine 256, leucine 292–valine 312, glycine 313–serine 333, valine 340–isoleucine 360, serine 370–leucine 390, phenylalanine 393–leucine 413, isoleucine 418–threonine 438, and isoleucine 465–valine 485.

This sequence belongs to the SLC13A/DASS transporter (TC 2.A.47) family. DIT1 subfamily.

The protein localises to the cell inner membrane. It catalyses the reaction (2R,3R)-tartrate(out) + succinate(in) = (2R,3R)-tartrate(in) + succinate(out). Its function is as follows. Catalyzes the uptake of tartrate in exchange for intracellular succinate. Essential for anaerobic L-tartrate fermentation. In Shigella flexneri, this protein is L-tartrate/succinate antiporter (ttdT).